The primary structure comprises 239 residues: MDEMDDFFGNDELDREPSPFGEEAIEDNTGEEGSRRIIEPKLLRTKKLTNPRLALNEKTLTGPKGITALREAFQNFNPNPKDDPYKNLEKMMKKYAYWGHLMFPKMKTEDVLNRVETLGTRRQVKLYIMKQRLGESTDDVENEKRETKSKNGIIDDGADDDEDDLFNDLPEKETPTKPINHTEKVVDSPEKKNGQVSNNDAEEEEYRMMEEERLREEQEAREAEAEDELMEDFDLNNDW.

2 stretches are compositionally biased toward acidic residues: residues 1–14 (MDEM…DELD) and 156–166 (DGADDDEDDLF). 2 disordered regions span residues 1 to 38 (MDEM…RRII) and 135 to 239 (ESTD…NNDW). 2 stretches are compositionally biased toward basic and acidic residues: residues 169 to 193 (LPEK…EKKN) and 206 to 223 (YRMM…AREA). Acidic residues predominate over residues 224 to 239 (EAEDELMEDFDLNNDW).

Belongs to the CSM3 family.

It is found in the cytoplasm. Its subcellular location is the nucleus. Functionally, required for normal progression of S-phase. Important for cell survival after DNA damage or replication stress. This chain is Protein TIPIN homolog, found in Caenorhabditis briggsae.